A 210-amino-acid chain; its full sequence is Phosphoribosyl-dephospho-CoA transferase (210 aa).

Catalysis depends on residues Asp-135 and Asp-137.

The protein belongs to the MdcG family.

The catalysed reaction is apo-[malonate decarboxylase ACP] + 2'-(5''-triphospho-alpha-D-ribosyl)-3'-dephospho-CoA = holo-[malonate decarboxylase ACP] + diphosphate. Functionally, transfers 2'-(5-triphosphoribosyl)-3'-dephosphocoenzyme-A to the apo-[acyl-carrier-protein] of the malonate decarboxylase to yield holo-[acyl-carrier-protein]. This is Phosphoribosyl-dephospho-CoA transferase from Pseudomonas aeruginosa (strain ATCC 15692 / DSM 22644 / CIP 104116 / JCM 14847 / LMG 12228 / 1C / PRS 101 / PAO1).